We begin with the raw amino-acid sequence, 368 residues long: UDP-N-acetylglucosamine--N-acetylmuramyl-(pentapeptide) pyrophosphoryl-undecaprenol N-acetylglucosamine transferase (368 aa).

Residues 10 to 12 (TGG), Asn-128, Arg-170, Ser-199, Ile-250, and Gln-295 each bind UDP-N-acetyl-alpha-D-glucosamine.

It belongs to the glycosyltransferase 28 family. MurG subfamily.

It localises to the cell inner membrane. The enzyme catalyses di-trans,octa-cis-undecaprenyl diphospho-N-acetyl-alpha-D-muramoyl-L-alanyl-D-glutamyl-meso-2,6-diaminopimeloyl-D-alanyl-D-alanine + UDP-N-acetyl-alpha-D-glucosamine = di-trans,octa-cis-undecaprenyl diphospho-[N-acetyl-alpha-D-glucosaminyl-(1-&gt;4)]-N-acetyl-alpha-D-muramoyl-L-alanyl-D-glutamyl-meso-2,6-diaminopimeloyl-D-alanyl-D-alanine + UDP + H(+). It participates in cell wall biogenesis; peptidoglycan biosynthesis. In terms of biological role, cell wall formation. Catalyzes the transfer of a GlcNAc subunit on undecaprenyl-pyrophosphoryl-MurNAc-pentapeptide (lipid intermediate I) to form undecaprenyl-pyrophosphoryl-MurNAc-(pentapeptide)GlcNAc (lipid intermediate II). The sequence is that of UDP-N-acetylglucosamine--N-acetylmuramyl-(pentapeptide) pyrophosphoryl-undecaprenol N-acetylglucosamine transferase from Chlorobium phaeovibrioides (strain DSM 265 / 1930) (Prosthecochloris vibrioformis (strain DSM 265)).